Here is a 119-residue protein sequence, read N- to C-terminus: Large ribosomal subunit protein bL20 (119 aa).

Belongs to the bacterial ribosomal protein bL20 family.

Functionally, binds directly to 23S ribosomal RNA and is necessary for the in vitro assembly process of the 50S ribosomal subunit. It is not involved in the protein synthesizing functions of that subunit. The polypeptide is Large ribosomal subunit protein bL20 (Levilactobacillus brevis (strain ATCC 367 / BCRC 12310 / CIP 105137 / JCM 1170 / LMG 11437 / NCIMB 947 / NCTC 947) (Lactobacillus brevis)).